A 32-amino-acid polypeptide reads, in one-letter code: ALTGRRPSVVYLHAAQCTGCSEALLRTTKPFR.

[4Fe-4S] cluster contacts are provided by cysteine 17 and cysteine 20.

Belongs to the [NiFe]/[NiFeSe] hydrogenase small subunit family. Heterodimer of a large and a small subunit. [3Fe-4S] cluster is required as a cofactor. [4Fe-4S] cluster serves as cofactor.

The protein localises to the periplasm. The enzyme catalyses 2 Fe(III)-[cytochrome c3] + H2 = 2 Fe(II)-[cytochrome c3] + 2 H(+). The protein is Periplasmic [NiFe] hydrogenase small subunit (hydA) of Desulfovibrio multispirans.